Consider the following 295-residue polypeptide: Inward rectifier potassium channel Kirbac3.1 (295 aa).

At 1 to 47 (MTGGMKPPARKPRILNSDGSSNITRLGLEKRGWLDDHYHDLLTVSWP) the chain is on the cytoplasmic side. Residues 48-69 (VFITLITGLYLVTNALFALAYL) form a helical membrane-spanning segment. The Extracellular portion of the chain corresponds to 70–82 (ACGDVIENARPGS). An intramembrane region (helical; Pore-forming) is located at residues 83 to 95 (FTDAFFFSVQTMA). The Selectivity filter motif lies at 96–100 (TIGYG). A helical membrane pass occupies residues 107–131 (PLANTLVTLEALCGMLGLAVAASLI). Residues 132-295 (YARFTRPTAG…DLGKFHEIAQ (164 aa)) are Cytoplasmic-facing.

Belongs to the inward rectifier-type potassium channel (TC 1.A.2.1) family. KCNJ11 subfamily. As to quaternary structure, homotetramer.

It localises to the membrane. Inward rectifier potassium channel that mediates potassium uptake into the cell. Inward rectifier potassium channels are characterized by a greater tendency to allow potassium to flow into the cell rather than out of it. The inward rectification may be achieved by the blockage of outward current by cytoplasmic divalent metal ions and polyamines. Complements an E.coli mutant that is defective in K(+) uptake. The polypeptide is Inward rectifier potassium channel Kirbac3.1 (Paramagnetospirillum magnetotacticum (Aquaspirillum magnetotacticum)).